A 645-amino-acid chain; its full sequence is Macrolide export ATP-binding/permease protein MacB (645 aa).

The ABC transporter domain occupies 6 to 244; that stretch reads IELEGIRRSY…SSIAVVPWQA (239 aa). ATP is bound at residue 42–49; sequence GASGSGKS. Transmembrane regions (helical) follow at residues 274–294, 526–546, 574–594, and 596–616; these read ALTL…MAIG, IAAI…LITV, AVVL…VIGV, and AALL…GALM.

The protein belongs to the ABC transporter superfamily. Macrolide exporter (TC 3.A.1.122) family. Homodimer.

The protein localises to the cell inner membrane. In terms of biological role, non-canonical ABC transporter that contains transmembrane domains (TMD), which form a pore in the inner membrane, and an ATP-binding domain (NBD), which is responsible for energy generation. Confers resistance against macrolides. In Nitrobacter winogradskyi (strain ATCC 25391 / DSM 10237 / CIP 104748 / NCIMB 11846 / Nb-255), this protein is Macrolide export ATP-binding/permease protein MacB.